Reading from the N-terminus, the 354-residue chain is Biotin synthase (354 aa).

In terms of domain architecture, Radical SAM core spans 41-265; the sequence is NEVQISRLLS…LMPHSRVRLS (225 aa). [4Fe-4S] cluster contacts are provided by Cys-56, Cys-60, and Cys-63. Positions 100, 131, 191, and 263 each coordinate [2Fe-2S] cluster.

The protein belongs to the radical SAM superfamily. Biotin synthase family. As to quaternary structure, homodimer. [4Fe-4S] cluster serves as cofactor. It depends on [2Fe-2S] cluster as a cofactor.

It carries out the reaction (4R,5S)-dethiobiotin + (sulfur carrier)-SH + 2 reduced [2Fe-2S]-[ferredoxin] + 2 S-adenosyl-L-methionine = (sulfur carrier)-H + biotin + 2 5'-deoxyadenosine + 2 L-methionine + 2 oxidized [2Fe-2S]-[ferredoxin]. It participates in cofactor biosynthesis; biotin biosynthesis; biotin from 7,8-diaminononanoate: step 2/2. Catalyzes the conversion of dethiobiotin (DTB) to biotin by the insertion of a sulfur atom into dethiobiotin via a radical-based mechanism. The protein is Biotin synthase of Shewanella woodyi (strain ATCC 51908 / MS32).